The sequence spans 385 residues: Acetate kinase (385 aa).

A Mg(2+)-binding site is contributed by N9. K16 is a binding site for ATP. A substrate-binding site is contributed by R87. D144 serves as the catalytic Proton donor/acceptor. Residues 202–206 and 277–279 contribute to the ATP site; these read HLGSG and DMR. Position 373 (E373) interacts with Mg(2+).

Belongs to the acetokinase family. As to quaternary structure, homodimer. The cofactor is Mg(2+). Requires Mn(2+) as cofactor.

The protein resides in the cytoplasm. The catalysed reaction is acetate + ATP = acetyl phosphate + ADP. It participates in metabolic intermediate biosynthesis; acetyl-CoA biosynthesis; acetyl-CoA from acetate: step 1/2. Its function is as follows. Catalyzes the formation of acetyl phosphate from acetate and ATP. Can also catalyze the reverse reaction. This Rickettsia typhi (strain ATCC VR-144 / Wilmington) protein is Acetate kinase.